Consider the following 328-residue polypeptide: Radiation response metalloprotease IrrE (328 aa).

The segment at 1-31 (MPSANVSPPCPSGVRGGGMGPKAKAEASKPH) is disordered. His-118 serves as a coordination point for Zn(2+). Glu-119 is a catalytic residue. Residues His-122 and Glu-149 each contribute to the Zn(2+) site. Disordered stretches follow at residues 217-238 (PREQ…LTVR) and 309-328 (RLGR…DAAQ).

Its function is as follows. Plays a central regulatory role in DNA repair and protection pathways in response to radiation stress. Acts as a site-specific metalloprotease that cleaves and inactivates the repressor protein DdrO, resulting in induced expression of genes required for DNA repair and cell survival after exposure to radiation. Regulates the expression of dozens of proteins from different pathways, including the important DNA repair proteins RecA and PprA. Binds to the promoters of recA and pprA. The sequence is that of Radiation response metalloprotease IrrE from Deinococcus radiodurans (strain ATCC 13939 / DSM 20539 / JCM 16871 / CCUG 27074 / LMG 4051 / NBRC 15346 / NCIMB 9279 / VKM B-1422 / R1).